Consider the following 309-residue polypeptide: Tagatose-6-phosphate kinase (309 aa).

The protein belongs to the carbohydrate kinase PfkB family. LacC subfamily.

The catalysed reaction is D-tagatofuranose 6-phosphate + ATP = D-tagatofuranose 1,6-bisphosphate + ADP + H(+). It participates in carbohydrate metabolism; D-tagatose 6-phosphate degradation; D-glyceraldehyde 3-phosphate and glycerone phosphate from D-tagatose 6-phosphate: step 1/2. The protein is Tagatose-6-phosphate kinase of Streptococcus pneumoniae (strain P1031).